The chain runs to 983 residues: Junction-mediating and -regulatory protein (983 aa).

Residues 1-119 (MSFALEETLE…RSARSLKGDP (119 aa)) form an interaction with p300/EP300 region. The segment covering 50–61 (TAQRQRSGSREQ) has biased composition (polar residues). The segment at 50–167 (TAQRQRSGSR…PVPPAPPVPP (118 aa)) is disordered. Residues 77–94 (AARGRSEAAASATAALRS) show a composition bias toward low complexity. A phosphoserine mark is found at Ser-108 and Ser-114. The segment covering 158–167 (PVPPAPPVPP) has biased composition (pro residues). Coiled-coil stretches lie at residues 315–351 (SELRQKGYEEVLQRARRRIQELLDKHKTIESMVELLD), 480–528 (LQMM…QLQL), and 571–612 (EAML…AKKA). The segment at 469–558 (EKLQYAVSKE…SIKRLISEKR (90 aa)) is interaction with p300/EP300. Position 704 is a phosphoserine (Ser-704). Residues 723–855 (EKTEVGGGGS…IPKSASAPAA (133 aa)) are disordered. Residues 734-761 (LGPSQTAEPQSLVQLEDTSSEQLESTSL) show a composition bias toward polar residues. Over residues 794-818 (PLPPPLPPTPPPPPPPPPPPPPPLP) the composition is skewed to pro residues. Positions 831 to 846 (TLEKDALRTEGNERSI) are enriched in basic and acidic residues. Position 883 is a phosphoserine (Ser-883). One can recognise a WH2 domain in the interval 916–933 (DSNNILAQIRKGVKLKKV). Residues 962–983 (IKEASPESEDEEEALPCTDWEN) form a disordered region. The segment covering 967 to 983 (PESEDEEEALPCTDWEN) has biased composition (acidic residues). A Phosphoserine modification is found at Ser-969.

This sequence belongs to the JMY family. In terms of assembly, interacts with p300/EP300, the complex activates p53/TP53 transcriptional activity. Interacts with TTC5/STRAP; the interaction takes place in the nucleus and facilitates the association between JMY and p300/EP300. Interacts with TTC5/STRAP; the interaction takes place in the cytoplasm and results in the inhibition of JYM's nucleation activity. Interacts with MAP1LC3B; the interaction results in the activation of JYM's nucleation activity in the cytoplasm. Post-translationally, ubiquitinated by MDM2, leading to its subsequent degradation by the proteasome. In case of DNA damage, the interaction with MDM2 is altered, preventing degradation and allowing interaction with p300/EP300 and its function in p53/TP53 stress response. Widely expressed, except in testis where it is expressed at low level.

The protein localises to the nucleus. It localises to the cytoplasmic vesicle. It is found in the cytoplasm. The protein resides in the cytoskeleton. Its subcellular location is the endomembrane system. The protein localises to the autophagosome membrane. Functionally, acts both as a nuclear p53/TP53-cofactor and a cytoplasmic regulator of actin dynamics depending on conditions. In nucleus, acts as a cofactor that increases p53/TP53 response via its interaction with p300/EP300. Increases p53/TP53-dependent transcription and apoptosis, suggesting an important role in p53/TP53 stress response such as DNA damage. In cytoplasm, acts as a nucleation-promoting factor for both branched and unbranched actin filaments. Activates the Arp2/3 complex to induce branched actin filament networks. Also catalyzes actin polymerization in the absence of Arp2/3, creating unbranched filaments. Contributes to cell motility by controlling actin dynamics. May promote the rapid formation of a branched actin network by first nucleating new mother filaments and then activating Arp2/3 to branch off these filaments. Upon nutrient stress, directly recruited by MAP1LC3B to the phagophore membrane surfaces to promote actin assembly during autophagy. The p53/TP53-cofactor and actin activator activities are regulated via its subcellular location. The sequence is that of Junction-mediating and -regulatory protein (Jmy) from Mus musculus (Mouse).